A 1512-amino-acid polypeptide reads, in one-letter code: DNA (cytosine-5)-methyltransferase 2 (1512 aa).

Residues methionine 1–glutamate 22 are compositionally biased toward basic and acidic residues. Disordered regions lie at residues methionine 1 to lysine 35 and alanine 634 to glutamate 678. Acidic residues predominate over residues valine 638 to valine 662. BAH domains lie at glutamate 707 to proline 841 and threonine 909 to proline 1026. Residues leucine 1071–lysine 1505 enclose the SAM-dependent MTase C5-type domain. Cysteine 1176 is a catalytic residue.

This sequence belongs to the class I-like SAM-binding methyltransferase superfamily. C5-methyltransferase family. As to expression, expressed at low levels in vegetative and floral organs.

It localises to the nucleus. The enzyme catalyses a 2'-deoxycytidine in DNA + S-adenosyl-L-methionine = a 5-methyl-2'-deoxycytidine in DNA + S-adenosyl-L-homocysteine + H(+). Maintains chromatin CpG methylation that plays a role in genomic imprinting, regulation of embryogenesis and seed viability. Required for proper patterns of CG DNA methylation in dividing cells. The protein is DNA (cytosine-5)-methyltransferase 2 (MET2) of Arabidopsis thaliana (Mouse-ear cress).